A 152-amino-acid polypeptide reads, in one-letter code: Small ribosomal subunit protein uS5 (152 aa).

Residues 14–77 form the S5 DRBM domain; it reads FEEVIVNIGR…DDAHKNLVKV (64 aa).

This sequence belongs to the universal ribosomal protein uS5 family. Part of the 30S ribosomal subunit. Contacts proteins S4 and S8.

Functionally, with S4 and S12 plays an important role in translational accuracy. Its function is as follows. Located at the back of the 30S subunit body where it stabilizes the conformation of the head with respect to the body. The polypeptide is Small ribosomal subunit protein uS5 (Sulfurovum sp. (strain NBC37-1)).